The primary structure comprises 334 residues: Large ribosomal subunit protein uL3 (334 aa).

The span at 1–10 (MGMKKSRPRR) shows a compositional bias: basic residues. The tract at residues 1-20 (MGMKKSRPRRGSLAFSPRKR) is disordered.

This sequence belongs to the universal ribosomal protein uL3 family. Part of the 50S ribosomal subunit. Forms a cluster with proteins L14 and L24e.

Functionally, one of the primary rRNA binding proteins, it binds directly near the 3'-end of the 23S rRNA, where it nucleates assembly of the 50S subunit. This is Large ribosomal subunit protein uL3 from Methanococcus maripaludis (strain C6 / ATCC BAA-1332).